The primary structure comprises 337 residues: Geranylgeranyl pyrophosphate synthase subD (337 aa).

3 residues coordinate isopentenyl diphosphate: K53, R56, and H85. 2 residues coordinate Mg(2+): D92 and D96. R101 provides a ligand contact to dimethylallyl diphosphate. Isopentenyl diphosphate is bound at residue R102. Residues K179, T180, and Q219 each coordinate dimethylallyl diphosphate. A Mg(2+)-binding site is contributed by D222. The dimethylallyl diphosphate site is built by N226, K236, and K246.

The protein belongs to the FPP/GGPP synthase family. Mg(2+) serves as cofactor.

It carries out the reaction isopentenyl diphosphate + dimethylallyl diphosphate = (2E)-geranyl diphosphate + diphosphate. The enzyme catalyses isopentenyl diphosphate + (2E)-geranyl diphosphate = (2E,6E)-farnesyl diphosphate + diphosphate. The catalysed reaction is isopentenyl diphosphate + (2E,6E)-farnesyl diphosphate = (2E,6E,10E)-geranylgeranyl diphosphate + diphosphate. Its pathway is secondary metabolite biosynthesis; terpenoid biosynthesis. Geranylgeranyl pyrophosphate synthase; part of the gene cluster that mediates the biosynthesis of the immunosuppressants subglutinols, meroterpenoids consisting of an alpha-pyrone (4-hydroxy-5,6-dimethyl-2-pyrone) moiety attached to a decalin core fused to a five-membered cyclic ether carrying a prenylside chain. The first step of the pathway is the synthesis of the alpha-pyrone moiety by the polyketide synthase subA via condensation of one acetyl-CoA starter unit with 3 malonyl-CoA units and 2 methylations. The alpha-pyrone is then combined with geranylgeranyl pyrophosphate (GGPP) formed by the GGPP synthase subD through the action of the prenyltransferase subC to yield a linear alpha-pyrone diterpenoid. Subsequent steps in the subglutinol biosynthetic pathway involve the decalin core formation, which is thought to be initiated by the epoxidation of the C10-C11 olefin by the FAD-dependent oxidoreductase subE. The following cyclization cascade would be catalyzed by the terpene cyclase subB. Lastly, the FAD-dependent dehydrogenase subF probably catalyzes the five-membered cyclic ether formation to complete the formation of subglutinol A. Subsequent redox reactions appear to give rise to subglutinol C and D, however, it remains unclear which enzymes are responsible for these transformations. SubD may have secondary function in the conversion of the identified subglutinols to subglutinol analog 45, which seems to be the major product of the cluster. The sequence is that of Geranylgeranyl pyrophosphate synthase subD from Metarhizium robertsii (strain ARSEF 23 / ATCC MYA-3075) (Metarhizium anisopliae (strain ARSEF 23)).